Here is a 277-residue protein sequence, read N- to C-terminus: Ribosomally synthesized cyclic peptide asperipin-2a precursor aprA (277 aa).

A signal peptide spans 1–19 (MHLSRYIAVLLSASSFVSA). 12 propeptides span residues 20-69 (LPLQ…LDKR), 76-88 (KRNAETPEDLDKR), 95-107 (KRNAETPEDLDKR), 114-126 (KRNAETPEDLDKR), 133-145 (KRNAETPEDLDKR), 152-164 (KRNAETPEDLDKR), 171-183 (KRNAETPDDLDKR), 190-202 (KRNAETPDDLDKR), 209-221 (KRNAETPEDLDKR), 228-240 (KRNAETPEDLDKR), 247-259 (KRNAETPEDLDKR), and 266-277 (KRNAETPEDLDK).

AprA is processed by kexin proteases to produce 11 identical copies of the hexapeptide Phe-Tyr-Tyr-Thr-Gly-Tyr, that is further modified aprY and aprR to yield asperipin-2a. The bicyclic structure of asperipin-2a is likely synthesized by the single ustYa family oxidase aprY. The reductase aprR may be required for the final reduction to yield asperipin-2a.

The protein operates within secondary metabolite biosynthesis. In terms of biological role, ribosomally synthesized cyclic peptide asperipin-2a precursor; part of the gene cluster that mediates the biosynthesis of the asperipin-2a, a bicyclic peptide that possesses two macrocyclic ether rings consisting of 14- and 17-membered paracyclophans. The aprA translated product contains a 11-fold repeated peptide embedding the hexapeptide Phe-Tyr-Tyr-Thr-Gly-Tyr, that is converted into asperipin-2a. After being excised from the precursor peptide by kexin proteases, the core peptides are cyclized and modified post-translationally by enzymes encoded within the corresponding gene cluster. The chain is Ribosomally synthesized cyclic peptide asperipin-2a precursor aprA from Aspergillus flavus (strain ATCC 200026 / FGSC A1120 / IAM 13836 / NRRL 3357 / JCM 12722 / SRRC 167).